Consider the following 307-residue polypeptide: Small ribosomal subunit protein uS2 (307 aa).

Residues 256–307 (GGEAEQAAVDATGGAATEETPAAESTGAASEAAAVSEAAEPATEQPAADAEA) form a disordered region. Residues 259–307 (AEQAAVDATGGAATEETPAAESTGAASEAAAVSEAAEPATEQPAADAEA) show a composition bias toward low complexity.

Belongs to the universal ribosomal protein uS2 family.

The protein is Small ribosomal subunit protein uS2 of Nocardioides sp. (strain ATCC BAA-499 / JS614).